The chain runs to 163 residues: Probable RNA-binding protein EIF1AD (163 aa).

Positions 18–96 constitute an S1-like domain; sequence MMEDDYELPT…VKAEISKILT (79 aa). The segment at 106–163 is disordered; sequence AGIWPERFAKNPPQEAKAQNDDEDSDFEDDLTPNTNRPVQESDEEDEDTDTESSDEED. 2 stretches are compositionally biased toward acidic residues: residues 126-136 and 146-163; these read DDEDSDFEDDL and ESDE…DEED.

It belongs to the EIF1AD family.

This Drosophila pseudoobscura pseudoobscura (Fruit fly) protein is Probable RNA-binding protein EIF1AD.